The chain runs to 218 residues: Acetyl- and succinyl-CoA transferase MT0822 (218 aa).

The N-acetyltransferase domain maps to D32 to D188. Substrate is bound by residues Q94, S109–L113, G119–T124, S145–N151, and R160.

In terms of assembly, dimer of dimers.

The catalysed reaction is L-lysyl-[protein] + acetyl-CoA = N(6)-acetyl-L-lysyl-[protein] + CoA + H(+). It carries out the reaction succinyl-CoA + L-lysyl-[protein] = N(6)-succinyl-L-lysyl-[protein] + CoA + H(+). In terms of biological role, acetylates and succinylates nucleoid-associated, DNA-binding protein HupB. The sequence is that of Acetyl- and succinyl-CoA transferase MT0822 from Mycobacterium tuberculosis (strain CDC 1551 / Oshkosh).